Reading from the N-terminus, the 187-residue chain is Probable chemoreceptor glutamine deamidase CheD 1 (187 aa).

It belongs to the CheD family.

The enzyme catalyses L-glutaminyl-[protein] + H2O = L-glutamyl-[protein] + NH4(+). Its function is as follows. Probably deamidates glutamine residues to glutamate on methyl-accepting chemotaxis receptors (MCPs), playing an important role in chemotaxis. The sequence is that of Probable chemoreceptor glutamine deamidase CheD 1 from Ruegeria sp. (strain TM1040) (Silicibacter sp.).